Consider the following 419-residue polypeptide: Tyrosine--tRNA ligase 1 (419 aa).

Tyr-35 serves as a coordination point for L-tyrosine. The 'HIGH' region signature appears at 40 to 49; it reads PTAGSLHIGH. L-tyrosine is bound by residues Tyr-172 and Gln-176. Residues 232-236 carry the 'KMSKS' region motif; the sequence is KFGKT. ATP is bound at residue Lys-235. Positions 353–418 constitute an S4 RNA-binding domain; sequence QDLVELLIES…KKHFCLVKRA (66 aa).

Belongs to the class-I aminoacyl-tRNA synthetase family. TyrS type 1 subfamily. As to quaternary structure, homodimer.

It localises to the cytoplasm. The enzyme catalyses tRNA(Tyr) + L-tyrosine + ATP = L-tyrosyl-tRNA(Tyr) + AMP + diphosphate + H(+). Catalyzes the attachment of tyrosine to tRNA(Tyr) in a two-step reaction: tyrosine is first activated by ATP to form Tyr-AMP and then transferred to the acceptor end of tRNA(Tyr). The polypeptide is Tyrosine--tRNA ligase 1 (Vibrio parahaemolyticus serotype O3:K6 (strain RIMD 2210633)).